A 125-amino-acid chain; its full sequence is MSRATNAKTNHARHKKVLDLAKGYRGRNSTNFRIAIEKVEKGLQYAYRDRRAKKRNFRSLWIQRINAGAREQGLTYSQFINGLIRAGIELDRKILADLAVTEPAAFASLVAQAKAALDTTAEQAA.

This sequence belongs to the bacterial ribosomal protein bL20 family.

Its function is as follows. Binds directly to 23S ribosomal RNA and is necessary for the in vitro assembly process of the 50S ribosomal subunit. It is not involved in the protein synthesizing functions of that subunit. The chain is Large ribosomal subunit protein bL20 from Rhodospirillum rubrum (strain ATCC 11170 / ATH 1.1.1 / DSM 467 / LMG 4362 / NCIMB 8255 / S1).